The primary structure comprises 319 residues: Acetyl-coenzyme A carboxylase carboxyl transferase subunit alpha (319 aa).

A CoA carboxyltransferase C-terminal domain is found at 35-296 (NLDEEVQRLR…KAQLLIDLAE (262 aa)).

This sequence belongs to the AccA family. As to quaternary structure, acetyl-CoA carboxylase is a heterohexamer composed of biotin carboxyl carrier protein (AccB), biotin carboxylase (AccC) and two subunits each of ACCase subunit alpha (AccA) and ACCase subunit beta (AccD).

The protein resides in the cytoplasm. It carries out the reaction N(6)-carboxybiotinyl-L-lysyl-[protein] + acetyl-CoA = N(6)-biotinyl-L-lysyl-[protein] + malonyl-CoA. It participates in lipid metabolism; malonyl-CoA biosynthesis; malonyl-CoA from acetyl-CoA: step 1/1. In terms of biological role, component of the acetyl coenzyme A carboxylase (ACC) complex. First, biotin carboxylase catalyzes the carboxylation of biotin on its carrier protein (BCCP) and then the CO(2) group is transferred by the carboxyltransferase to acetyl-CoA to form malonyl-CoA. This Photorhabdus laumondii subsp. laumondii (strain DSM 15139 / CIP 105565 / TT01) (Photorhabdus luminescens subsp. laumondii) protein is Acetyl-coenzyme A carboxylase carboxyl transferase subunit alpha.